Reading from the N-terminus, the 101-residue chain is Peroxisomal biogenesis factor 39 (101 aa).

Its subcellular location is the peroxisome. Its function is as follows. May be a peroxin involved in the PTS2-mediated protein import pathway. This chain is Peroxisomal biogenesis factor 39, found in Homo sapiens (Human).